We begin with the raw amino-acid sequence, 880 residues long: MKAMETQRNCRTLSLKEIILCTLVLGIIGIIKCEDNMWVTVYYGVPVWREADTTLFCASDAKAQNPEVHNVWASQACVSTNPNPEEIELTNVTEYFNAWENNMVEQMHEDIVNLWDQSVKPCVKLIPLCVTLNCSLFKCIKENGNTTNCTVQISTGNDSTANNITVGTIDMYNCSFNATTELRDRKKQVYSLFYRQDLEPLEGNKPPEGDKNALYRLYNCNTTAMTQACSKVSLEPIPIHYCAPAGFALLKCNDKNFTGIGQCKNVSTVHCTHGIRPVVSTQFLLNGTLEEKVTVLDRNVSNDMDTIIVKLNETVRLNCTRTGNNTIKGIPIGPSQIFYGIETVIGDTRQAFCQLNKTVWTNTFKKVRHALNETYKGYLGNETITFGPSTGGDLEVTNLHLICGGEFFYCNTSILFNTSIIFNETKDDNITIPCRIRQIVRLWQRVGRGIFLPPIRGTINCISNITGILFAQQKTDRMNKSAMFTPVGGEMRNNWRSELYKYKVVRIEPLGVAPTKAKRRTVHREKRAAVGLGALFLGFLGAAGSTMGAASLTLTVQARQLLSGIVQQQSNLLRAIEAQQHLLQLSVWGIKQLQARVLAVERYLKDQQLLGLWGCSGKLICTTSVPWNTTWTNKSYDDIWYNMTWMQWDKEVSNYTDVIYNLLEKAQTQQENNEKELLELDKWASLWNWFDITSWLWYIKIFIIIVGGLIGLRIVFALLSIVNRVRQGYSPLSFQTLIPARRDRDRPEEIEEGGGEPDNVRSIRLVSGFLALAWNDLRDLCLFLYHRLRDLLLIVLRTLELVGQTLLKGLRRGREALIHLRGILQYWGQELKTSAISLLDTTAIAVAEGTDRIIEIAQRFGRGILNIPRRIRQGLERALL.

The signal sequence occupies residues 1–35; sequence MKAMETQRNCRTLSLKEIILCTLVLGIIGIIKCED. Residues 36–701 are Extracellular-facing; the sequence is NMWVTVYYGV…ITSWLWYIKI (666 aa). The cysteines at positions 57 and 77 are disulfide-linked. 19 N-linked (GlcNAc...) asparagine; by host glycosylation sites follow: asparagine 91, asparagine 133, asparagine 145, asparagine 148, asparagine 157, asparagine 163, asparagine 173, asparagine 177, asparagine 221, asparagine 256, asparagine 265, asparagine 286, asparagine 299, asparagine 312, asparagine 318, asparagine 324, asparagine 356, asparagine 372, and asparagine 381. 5 cysteine pairs are disulfide-bonded: cysteine 122–cysteine 229, cysteine 129–cysteine 220, cysteine 134–cysteine 174, cysteine 242–cysteine 271, and cysteine 252–cysteine 263. A V1 region spans residues 134-173; sequence CSLFKCIKENGNTTNCTVQISTGNDSTANNITVGTIDMYN. Positions 174 to 220 are V2; the sequence is CSFNATTELRDRKKQVYSLFYRQDLEPLEGNKPPEGDKNALYRLYNC. Residues 319–352 form a V3 region; the sequence is CTRTGNNTIKGIPIGPSQIFYGIETVIGDTRQAF. The cysteines at positions 319 and 353 are disulfide-linked. Residues 389 to 399 form a CD4-binding loop region; that stretch reads STGGDLEVTNL. 2 disulfide bridges follow: cysteine 403-cysteine 461 and cysteine 410-cysteine 434. A V4 region spans residues 410-434; the sequence is CNTSILFNTSIIFNETKDDNITIPC. Residues asparagine 411, asparagine 417, asparagine 423, asparagine 429, asparagine 464, and asparagine 479 are each glycosylated (N-linked (GlcNAc...) asparagine; by host). The interval 479–487 is V5; it reads NKSAMFTPV. The fusion peptide stretch occupies residues 528-549; that stretch reads AAVGLGALFLGFLGAAGSTMGA. The interval 591 to 609 is immunosuppression; that stretch reads KQLQARVLAVERYLKDQQL. Cysteine 615 and cysteine 621 are oxidised to a cystine. Residues asparagine 628, asparagine 633, asparagine 642, and asparagine 654 are each glycosylated (N-linked (GlcNAc...) asparagine; by host). Positions 650-684 form a coiled coil; that stretch reads KEVSNYTDVIYNLLEKAQTQQENNEKELLELDKWA. The interval 679-700 is MPER; binding to GalCer; the sequence is ELDKWASLWNWFDITSWLWYIK. The chain crosses the membrane as a helical span at residues 702–722; it reads FIIIVGGLIGLRIVFALLSIV. Topologically, residues 723–880 are cytoplasmic; that stretch reads NRVRQGYSPL…IRQGLERALL (158 aa). The YXXL motif; contains endocytosis signal signature appears at 729–732; sequence YSPL. Residue cysteine 781 is the site of S-palmitoyl cysteine; by host attachment. Residues 879–880 carry the Di-leucine internalization motif motif; the sequence is LL.

The protein belongs to the HIV-1 env protein family. The mature envelope protein (Env) consists of a homotrimer of non-covalently associated gp120-gp41 heterodimers. The resulting complex protrudes from the virus surface as a spike. There seems to be as few as 10 spikes on the average virion. Interacts with host CD4, CCR5 and CXCR4. Gp120 also interacts with the C-type lectins CD209/DC-SIGN and CLEC4M/DC-SIGNR (collectively referred to as DC-SIGN(R)). Gp120 and gp41 interact with GalCer. Gp120 interacts with host ITGA4/ITGB7 complex; on CD4+ T-cells, this interaction results in rapid activation of integrin ITGAL/LFA-1, which facilitates efficient cell-to-cell spreading of HIV-1. Gp120 interacts with cell-associated heparan sulfate; this interaction increases virus infectivity on permissive cells and may be involved in infection of CD4- cells. As to quaternary structure, the mature envelope protein (Env) consists of a homotrimer of non-covalently associated gp120-gp41 heterodimers. The resulting complex protrudes from the virus surface as a spike. There seems to be as few as 10 spikes on the average virion. Highly glycosylated by host. The high number of glycan on the protein is reffered to as 'glycan shield' because it contributes to hide protein sequence from adaptive immune system. Post-translationally, palmitoylation of the transmembrane protein and of Env polyprotein (prior to its proteolytic cleavage) is essential for their association with host cell membrane lipid rafts. Palmitoylation is therefore required for envelope trafficking to classical lipid rafts, but not for viral replication. In terms of processing, specific enzymatic cleavages in vivo yield mature proteins. Envelope glycoproteins are synthesized as an inactive precursor that is heavily N-glycosylated and processed likely by host cell furin in the Golgi to yield the mature SU and TM proteins. The cleavage site between SU and TM requires the minimal sequence [KR]-X-[KR]-R. About 2 of the 9 disulfide bonds of gp41 are reduced by P4HB/PDI, following binding to CD4 receptor.

Its subcellular location is the virion membrane. The protein resides in the host cell membrane. It is found in the host endosome membrane. Functionally, attaches the virus to the host lymphoid cell by binding to the primary receptor CD4. This interaction induces a structural rearrangement creating a high affinity binding site for a chemokine coreceptor like CXCR4 and/or CCR5. Acts as a ligand for CD209/DC-SIGN and CLEC4M/DC-SIGNR, which are respectively found on dendritic cells (DCs), and on endothelial cells of liver sinusoids and lymph node sinuses. These interactions allow capture of viral particles at mucosal surfaces by these cells and subsequent transmission to permissive cells. HIV subverts the migration properties of dendritic cells to gain access to CD4+ T-cells in lymph nodes. Virus transmission to permissive T-cells occurs either in trans (without DCs infection, through viral capture and transmission), or in cis (following DCs productive infection, through the usual CD4-gp120 interaction), thereby inducing a robust infection. In trans infection, bound virions remain infectious over days and it is proposed that they are not degraded, but protected in non-lysosomal acidic organelles within the DCs close to the cell membrane thus contributing to the viral infectious potential during DCs' migration from the periphery to the lymphoid tissues. On arrival at lymphoid tissues, intact virions recycle back to DCs' cell surface allowing virus transmission to CD4+ T-cells. Its function is as follows. Acts as a class I viral fusion protein. Under the current model, the protein has at least 3 conformational states: pre-fusion native state, pre-hairpin intermediate state, and post-fusion hairpin state. During fusion of viral and target intracellular membranes, the coiled coil regions (heptad repeats) assume a trimer-of-hairpins structure, positioning the fusion peptide in close proximity to the C-terminal region of the ectodomain. The formation of this structure appears to drive apposition and subsequent fusion of viral and target cell membranes. Complete fusion occurs in host cell endosomes and is dynamin-dependent, however some lipid transfer might occur at the plasma membrane. The virus undergoes clathrin-dependent internalization long before endosomal fusion, thus minimizing the surface exposure of conserved viral epitopes during fusion and reducing the efficacy of inhibitors targeting these epitopes. Membranes fusion leads to delivery of the nucleocapsid into the cytoplasm. Oligomerizes in the host endoplasmic reticulum into predominantly trimers. In a second time, gp160 transits in the host Golgi, where glycosylation is completed. The precursor is then proteolytically cleaved in the trans-Golgi and thereby activated by cellular furin or furin-like proteases to produce gp120 and gp41. The sequence is that of Envelope glycoprotein gp160 from Pan troglodytes (Chimpanzee).